The chain runs to 83 residues: uncharacterized protein (83 aa).

The helical transmembrane segment at 58–78 (AVLLWIAIIATLGNIVVVGVV) threads the bilayer.

The protein localises to the membrane. This is an uncharacterized protein from Homo sapiens (Human).